The primary structure comprises 552 residues: ATP synthase subunit alpha (552 aa).

173 to 180 (GDRQTGKT) lines the ATP pocket. A disordered region spans residues 516-552 (DGKPLVNEPAPSPLDPGLVRQESIPVHRPAARKDDEG).

It belongs to the ATPase alpha/beta chains family. F-type ATPases have 2 components, CF(1) - the catalytic core - and CF(0) - the membrane proton channel. CF(1) has five subunits: alpha(3), beta(3), gamma(1), delta(1), epsilon(1). CF(0) has three main subunits: a(1), b(2) and c(9-12). The alpha and beta chains form an alternating ring which encloses part of the gamma chain. CF(1) is attached to CF(0) by a central stalk formed by the gamma and epsilon chains, while a peripheral stalk is formed by the delta and b chains.

Its subcellular location is the cell membrane. It carries out the reaction ATP + H2O + 4 H(+)(in) = ADP + phosphate + 5 H(+)(out). Its function is as follows. Produces ATP from ADP in the presence of a proton gradient across the membrane. The alpha chain is a regulatory subunit. The chain is ATP synthase subunit alpha from Frankia casuarinae (strain DSM 45818 / CECT 9043 / HFP020203 / CcI3).